A 531-amino-acid chain; its full sequence is Cation transporter HKT1;3 (531 aa).

At 1-46 (MNHCLVVSHKKLQTFRTFAASKFSSFTKSAQKSIKYSFQFIYQNNP) the chain is on the cytoplasmic side. The next 2 helical transmembrane spans lie at 47–67 (LFVH…SLKV) and 108–128 (LWVL…MLGI). Over 129 to 190 (HFMRAEFGTK…GGHVEPKTIK (62 aa)) the chain is Cytoplasmic. 2 helical membrane-spanning segments follow: residues 191-211 (FLGF…SLLI) and 264-284 (ILLL…APCL). Over 285–321 (RLMVWSLEKITGKKDCRYILEYPKAIGYKHLMSTRES) the chain is Cytoplasmic. The next 2 membrane-spanning stretches (helical) occupy residues 322–342 (VYLT…FLSL) and 383–403 (SAIL…SFLP). The Cytoplasmic portion of the chain corresponds to 404–421 (RHDGEDSKTEKINKRKGL). The next 2 helical transmembrane spans lie at 422 to 442 (LENW…LICI) and 494 to 514 (YGFA…VMLF). Residues 515 to 530 (GRLKTFNMKGGRAWKL) are Cytoplasmic-facing.

This sequence belongs to the TrkH potassium transport family. HKT (TC 2.A.38.3) subfamily. Interacts with CNIH1. In terms of tissue distribution, weakly expressed. In roots, expressed in epidermis, exodermis, cortex, and sieve elements and companion cells of phloem. In mature leaves, expressed in large highly vacuolated cells of the adaxial epidermis, phloem and xylem.

The protein localises to the endoplasmic reticulum membrane. It is found in the golgi apparatus membrane. It catalyses the reaction Na(+)(in) = Na(+)(out). Functionally, functions as a highly-selective sodium transporter. Does not seem to function as sodium-potassium cotransporter. May be involved in turgor changes for rolling and unrolling of leaves in response to environmental variations. In Oryza sativa subsp. japonica (Rice), this protein is Cation transporter HKT1;3.